Reading from the N-terminus, the 554-residue chain is 5'-AMP-activated protein kinase catalytic subunit alpha-1 (554 aa).

The Protein kinase domain maps to 22 to 274 (YILGDTLGVG…IKDIREHEWF (253 aa)). Thr-27 is subject to Phosphothreonine. ATP-binding positions include 28 to 36 (LGVGTFGKV) and Lys-51. Catalysis depends on Asp-145, which acts as the Proton acceptor. Thr-178 is subject to Phosphothreonine; by LKB1 and CaMKK2. A phosphothreonine mark is found at Thr-264 and Thr-350. Residues 297–376 (EALKEVCEKF…PERVPFLVAE (80 aa)) are AIS. Ser-351 is modified (phosphoserine). Residue Ser-355 is modified to Phosphoserine; by ULK1. Thr-363 carries the post-translational modification Phosphothreonine; by ULK1. Thr-377 carries the post-translational modification Phosphothreonine. Residue Ser-392 is modified to Phosphoserine; by ULK1. The residue at position 462 (Ser-462) is a Phosphoserine. A compositionally biased stretch (polar residues) spans 480–500 (KSGTATPQRSGSVSNYRSCQR). A disordered region spans residues 480-531 (KSGTATPQRSGSVSNYRSCQRSDSDAEAQGKSSEVSLTSSVTSLDSSPVDLT). Ser-481 is subject to Phosphoserine; by ULK1. Thr-483 bears the Phosphothreonine; by ULK1 mark. Phosphothreonine is present on Thr-485. Phosphoserine is present on residues Ser-491, Ser-503, Ser-519, and Ser-522. Residues 511–530 (SSEVSLTSSVTSLDSSPVDL) are compositionally biased toward low complexity.

It belongs to the protein kinase superfamily. CAMK Ser/Thr protein kinase family. SNF1 subfamily. As to quaternary structure, AMPK is a heterotrimer of an alpha catalytic subunit (PRKAA1 or PRKAA2), a beta (PRKAB1 or PRKAB2) and a gamma non-catalytic subunits (PRKAG1, PRKAG2 or PRKAG3). Interacts with FNIP1 and FNIP2. It depends on Mg(2+) as a cofactor. Post-translationally, ubiquitinated. In terms of processing, phosphorylated at Thr-183 by STK11/LKB1 in complex with STE20-related adapter-alpha (STRADA) pseudo kinase and CAB39. Also phosphorylated at Thr-183 by CAMKK2; triggered by a rise in intracellular calcium ions, without detectable changes in the AMP/ATP ratio. CAMKK1 can also phosphorylate Thr-183, but at a much lower level. Dephosphorylated by protein phosphatase 2A and 2C (PP2A and PP2C). Phosphorylated by ULK1 and ULK2; leading to negatively regulate AMPK activity and suggesting the existence of a regulatory feedback loop between ULK1, ULK2 and AMPK. Dephosphorylated by PPM1A and PPM1B. Glycosylated; O-GlcNAcylated by OGT, promoting the AMP-activated protein kinase (AMPK) activity.

The protein resides in the cytoplasm. The protein localises to the nucleus. The catalysed reaction is L-seryl-[protein] + ATP = O-phospho-L-seryl-[protein] + ADP + H(+). It carries out the reaction L-threonyl-[protein] + ATP = O-phospho-L-threonyl-[protein] + ADP + H(+). It catalyses the reaction L-seryl-[acetyl-CoA carboxylase] + ATP = O-phospho-L-seryl-[acetyl-CoA carboxylase] + ADP + H(+). The enzyme catalyses L-seryl-[3-hydroxy-3-methylglutaryl-coenzyme A reductase] + ATP = O-phospho-L-seryl-[3-hydroxy-3-methylglutaryl-coenzyme A reductase] + ADP + H(+). The catalysed reaction is L-seryl-[tau protein] + ATP = O-phospho-L-seryl-[tau protein] + ADP + H(+). It carries out the reaction L-threonyl-[tau protein] + ATP = O-phospho-L-threonyl-[tau protein] + ADP + H(+). With respect to regulation, activated by phosphorylation on Thr-183. Binding of AMP to non-catalytic gamma subunit (PRKAG1, PRKAG2 or PRKAG3) results in allosteric activation, inducing phosphorylation on Thr-183. AMP-binding to gamma subunit also sustains activity by preventing dephosphorylation of Thr-183. ADP also stimulates Thr-183 phosphorylation, without stimulating already phosphorylated AMPK. ATP promotes dephosphorylation of Thr-183, rendering the enzyme inactive. Under physiological conditions AMPK mainly exists in its inactive form in complex with ATP, which is much more abundant than AMP. Selectively inhibited by compound C (6-[4-(2-Piperidin-1-yl-ethoxy)-phenyl)]-3-pyridin-4-yl-pyyrazolo[1,5-a] pyrimidine. Activated by resveratrol, a natural polyphenol present in red wine, and S17834, a synthetic polyphenol. Functionally, catalytic subunit of AMP-activated protein kinase (AMPK), an energy sensor protein kinase that plays a key role in regulating cellular energy metabolism. In response to reduction of intracellular ATP levels, AMPK activates energy-producing pathways and inhibits energy-consuming processes: inhibits protein, carbohydrate and lipid biosynthesis, as well as cell growth and proliferation. AMPK acts via direct phosphorylation of metabolic enzymes, and by longer-term effects via phosphorylation of transcription regulators. Regulates lipid synthesis by phosphorylating and inactivating lipid metabolic enzymes such as ACACA, ACACB, GYS1, HMGCR and LIPE; regulates fatty acid and cholesterol synthesis by phosphorylating acetyl-CoA carboxylase (ACACA and ACACB) and hormone-sensitive lipase (LIPE) enzymes, respectively. Promotes lipolysis of lipid droplets by mediating phosphorylation of isoform 1 of CHKA (CHKalpha2). Regulates insulin-signaling and glycolysis by phosphorylating IRS1, PFKFB2 and PFKFB3. AMPK stimulates glucose uptake in muscle by increasing the translocation of the glucose transporter SLC2A4/GLUT4 to the plasma membrane, possibly by mediating phosphorylation of TBC1D4/AS160. Regulates transcription and chromatin structure by phosphorylating transcription regulators involved in energy metabolism such as CRTC2/TORC2, FOXO3, histone H2B, HDAC5, MEF2C, MLXIPL/ChREBP, EP300, HNF4A, p53/TP53, SREBF1, SREBF2 and PPARGC1A. Acts as a key regulator of glucose homeostasis in liver by phosphorylating CRTC2/TORC2, leading to CRTC2/TORC2 sequestration in the cytoplasm. In response to stress, phosphorylates 'Ser-36' of histone H2B (H2BS36ph), leading to promote transcription. Acts as a key regulator of cell growth and proliferation by phosphorylating FNIP1, TSC2, RPTOR, WDR24 and ATG1/ULK1: in response to nutrient limitation, negatively regulates the mTORC1 complex by phosphorylating RPTOR component of the mTORC1 complex and by phosphorylating and activating TSC2. Also phosphorylates and inhibits GATOR2 subunit WDR24 in response to nutrient limitation, leading to suppress glucose-mediated mTORC1 activation. In response to energetic stress, phosphorylates FNIP1, inactivating the non-canonical mTORC1 signaling, thereby promoting nuclear translocation of TFEB and TFE3, and inducing transcription of lysosomal or autophagy genes. In response to nutrient limitation, promotes autophagy by phosphorylating and activating ATG1/ULK1. In that process also activates WDR45/WIPI4. Phosphorylates CASP6, thereby preventing its autoprocessing and subsequent activation. In response to nutrient limitation, phosphorylates transcription factor FOXO3 promoting FOXO3 mitochondrial import. Also acts as a regulator of cellular polarity by remodeling the actin cytoskeleton; probably by indirectly activating myosin. AMPK also acts as a regulator of circadian rhythm by mediating phosphorylation of CRY1, leading to destabilize it. May regulate the Wnt signaling pathway by phosphorylating CTNNB1, leading to stabilize it. Also has tau-protein kinase activity: in response to amyloid beta A4 protein (APP) exposure, activated by CAMKK2, leading to phosphorylation of MAPT/TAU; however the relevance of such data remains unclear in vivo. Also phosphorylates CFTR, EEF2K, KLC1, NOS3 and SLC12A1. Regulates hepatic lipogenesis. Activated via SIRT3, represses sterol regulatory element-binding protein (SREBP) transcriptional activities and ATP-consuming lipogenesis to restore cellular energy balance. Upon stress, regulates mitochondrial fragmentation through phosphorylation of MTFR1L. This chain is 5'-AMP-activated protein kinase catalytic subunit alpha-1 (PRKAA1), found in Pongo abelii (Sumatran orangutan).